The primary structure comprises 749 residues: Soluble starch synthase 2-1, chloroplastic/amyloplastic (749 aa).

A chloroplast-targeting transit peptide spans 1-44; that stretch reads MAAAAVSSLLAPSGSCYSPGCHSCWGPGPGGGRRLPSPRRRPIT. Residue lysine 272 coordinates ADP-alpha-D-glucose.

This sequence belongs to the glycosyltransferase 1 family. Bacterial/plant glycogen synthase subfamily. Expressed in endosperm, leaves, and weakly in roots.

It is found in the plastid. It localises to the amyloplast. The protein localises to the chloroplast. It carries out the reaction [(1-&gt;4)-alpha-D-glucosyl](n) + ADP-alpha-D-glucose = [(1-&gt;4)-alpha-D-glucosyl](n+1) + ADP + H(+). The protein operates within glycan biosynthesis; starch biosynthesis. Functionally, may be involved in starch synthesis in endosperm amyloplasts and contribute to the deposition of transient starch in chloroplasts of leaves. This is Soluble starch synthase 2-1, chloroplastic/amyloplastic (SSII-1) from Oryza sativa subsp. japonica (Rice).